The sequence spans 414 residues: Histidine--tRNA ligase (414 aa).

Belongs to the class-II aminoacyl-tRNA synthetase family. In terms of assembly, homodimer.

It localises to the cytoplasm. The enzyme catalyses tRNA(His) + L-histidine + ATP = L-histidyl-tRNA(His) + AMP + diphosphate + H(+). This chain is Histidine--tRNA ligase, found in Ehrlichia ruminantium (strain Welgevonden).